The sequence spans 47 residues: Trifunctional NAD biosynthesis/regulator protein NadR (47 aa).

Residues 7 to 47 (LKSAIKQKGCTLDEVAEPSGMTKGYLSQLLNRKIKARARRS) form the HTH cro/C1-type domain. A DNA-binding region (H-T-H motif) is located at residues 18 to 37 (LDEVAEPSGMTKGYLSQLLN).

It localises to the cell membrane. Its subcellular location is the cytoplasm. The enzyme catalyses beta-nicotinamide D-ribonucleotide + ATP + H(+) = diphosphate + NAD(+). It catalyses the reaction beta-nicotinamide D-riboside + ATP = beta-nicotinamide D-ribonucleotide + ADP + H(+). Its pathway is cofactor biosynthesis; NAD(+) biosynthesis [regulation]. It participates in cofactor biosynthesis; NAD(+) biosynthesis; NAD(+) from nicotinamide D-ribonucleotide: step 1/1. Its function is as follows. This enzyme has three activities: DNA binding, nicotinamide mononucleotide (NMN) adenylyltransferase and ribosylnicotinamide (RN) kinase. The DNA-binding domain binds to the nadB operator sequence in an NAD- and ATP-dependent manner. As NAD levels increase within the cell, the affinity of NadR for the nadB operator regions of nadA, nadB, and pncB increases, repressing the transcription of these genes. The RN kinase activity catalyzes the phosphorylation of RN to form nicotinamide ribonucleotide. The NMN adenylyltransferase activity catalyzes the transfer of the AMP moiety of ATP to nicotinamide ribonucleotide to form NAD(+). The NMN adenylyltransferase domain also functions as the NAD and ATP sensor. The protein is Trifunctional NAD biosynthesis/regulator protein NadR (nadR) of Klebsiella pneumoniae.